The following is a 461-amino-acid chain: Bifunctional protein GlmU (461 aa).

Residues 1–232 (MNLQIIILAA…SFEVQGINNR (232 aa)) form a pyrophosphorylase region. Residues 8-11 (LAAG), Lys22, Gln73, and 78-79 (GT) each bind UDP-N-acetyl-alpha-D-glucosamine. Residue Asp102 coordinates Mg(2+). Residues Gly142, Glu157, and Asn230 each contribute to the UDP-N-acetyl-alpha-D-glucosamine site. Asn230 contacts Mg(2+). The segment at 233–253 (QQLQQLERIWQQRAANQLMEK) is linker. The interval 254 to 461 (GATLADANRF…WKRPVKRERD (208 aa)) is N-acetyltransferase. Positions 336 and 354 each coordinate UDP-N-acetyl-alpha-D-glucosamine. Catalysis depends on His366, which acts as the Proton acceptor. Residues Tyr369 and Asn380 each contribute to the UDP-N-acetyl-alpha-D-glucosamine site. Acetyl-CoA-binding positions include Ala383, 389 to 390 (NY), Ser408, and Ala426.

This sequence in the N-terminal section; belongs to the N-acetylglucosamine-1-phosphate uridyltransferase family. It in the C-terminal section; belongs to the transferase hexapeptide repeat family. Homotrimer. Mg(2+) serves as cofactor.

It is found in the cytoplasm. The enzyme catalyses alpha-D-glucosamine 1-phosphate + acetyl-CoA = N-acetyl-alpha-D-glucosamine 1-phosphate + CoA + H(+). The catalysed reaction is N-acetyl-alpha-D-glucosamine 1-phosphate + UTP + H(+) = UDP-N-acetyl-alpha-D-glucosamine + diphosphate. It functions in the pathway nucleotide-sugar biosynthesis; UDP-N-acetyl-alpha-D-glucosamine biosynthesis; N-acetyl-alpha-D-glucosamine 1-phosphate from alpha-D-glucosamine 6-phosphate (route II): step 2/2. Its pathway is nucleotide-sugar biosynthesis; UDP-N-acetyl-alpha-D-glucosamine biosynthesis; UDP-N-acetyl-alpha-D-glucosamine from N-acetyl-alpha-D-glucosamine 1-phosphate: step 1/1. The protein operates within bacterial outer membrane biogenesis; LPS lipid A biosynthesis. Its function is as follows. Catalyzes the last two sequential reactions in the de novo biosynthetic pathway for UDP-N-acetylglucosamine (UDP-GlcNAc). The C-terminal domain catalyzes the transfer of acetyl group from acetyl coenzyme A to glucosamine-1-phosphate (GlcN-1-P) to produce N-acetylglucosamine-1-phosphate (GlcNAc-1-P), which is converted into UDP-GlcNAc by the transfer of uridine 5-monophosphate (from uridine 5-triphosphate), a reaction catalyzed by the N-terminal domain. The chain is Bifunctional protein GlmU from Legionella pneumophila subsp. pneumophila (strain Philadelphia 1 / ATCC 33152 / DSM 7513).